A 361-amino-acid polypeptide reads, in one-letter code: Gibberellin 20 oxidase 1-D (361 aa).

Residues 199–299 (GNDSIMRLNY…RKSLAFFLCP (101 aa)) form the Fe2OG dioxygenase domain. Residues His-224, Asp-226, and His-280 each coordinate Fe cation. The active site involves Arg-290.

It belongs to the iron/ascorbate-dependent oxidoreductase family. GA20OX subfamily. The cofactor is Fe cation. L-ascorbate serves as cofactor. As to expression, expressed in nodes and the ear of the elongating stem.

It catalyses the reaction gibberellin A12 + 2 2-oxoglutarate + 3 O2 + H(+) = gibberellin A9 + 2 succinate + 3 CO2 + 2 H2O. It carries out the reaction gibberellin A53 + 2 2-oxoglutarate + 3 O2 + H(+) = gibberellin A20 + 2 succinate + 3 CO2 + 2 H2O. Key oxidase enzyme in the biosynthesis of gibberellin that catalyzes the conversion of GA12 and GA53 to GA9 and GA20 respectively, via a three-step oxidation at C-20 of the GA skeleton. This Triticum aestivum (Wheat) protein is Gibberellin 20 oxidase 1-D (GA20ox1D).